A 309-amino-acid chain; its full sequence is Methionyl-tRNA formyltransferase (309 aa).

107–110 (SLLP) contacts (6S)-5,6,7,8-tetrahydrofolate.

Belongs to the Fmt family.

The enzyme catalyses L-methionyl-tRNA(fMet) + (6R)-10-formyltetrahydrofolate = N-formyl-L-methionyl-tRNA(fMet) + (6S)-5,6,7,8-tetrahydrofolate + H(+). Its function is as follows. Attaches a formyl group to the free amino group of methionyl-tRNA(fMet). The formyl group appears to play a dual role in the initiator identity of N-formylmethionyl-tRNA by promoting its recognition by IF2 and preventing the misappropriation of this tRNA by the elongation apparatus. In Borrelia recurrentis (strain A1), this protein is Methionyl-tRNA formyltransferase.